Reading from the N-terminus, the 152-residue chain is Chemokine-like factor (152 aa).

The region spanning phenylalanine 13–leucine 133 is the MARVEL domain. 3 helical membrane-spanning segments follow: residues tyrosine 45 to leucine 65, isoleucine 81 to proline 101, and valine 108 to isoleucine 128.

It belongs to the chemokine-like factor family. Isoform 1, isoform 2, isoform 3 and isoform 4 have highest expression levels in adult spleen, lung, testis, ovary, peripheral blood leukocyte, placenta, pancreas, and in fetal brain, skeletal muscle, thymus and heart. Lower expression levels in adult skeletal muscle, liver, thymus colon, prostate and fetal spleen and liver.

The protein localises to the secreted. It localises to the membrane. With respect to regulation, partly inhibited by interleukin 10. Its function is as follows. May play an important role in inflammation and regeneration of skeletal muscle. Essential for embryonic development. Functionally, has chemotactic response in monocytes, neutrophils and lymphocytes. Binds CCR4. This is Chemokine-like factor (CKLF) from Homo sapiens (Human).